A 335-amino-acid polypeptide reads, in one-letter code: Teichoic acids export ATP-binding protein TagH (335 aa).

The ABC transporter domain occupies 26–246; the sequence is IKGLFMPKSQ…YDEFVKWFNK (221 aa). ATP is bound at residue 60 to 67; it reads GINGSGKS.

It belongs to the ABC transporter superfamily. Teichoic acids exporter (TC 3.A.1.104.1) family. As to quaternary structure, the complex is composed of two ATP-binding proteins (TagH) and two transmembrane proteins (TagG).

Its subcellular location is the cell membrane. It carries out the reaction ATP + H2O + teichoic acidSide 1 = ADP + phosphate + teichoic acidSide 2.. In terms of biological role, part of the ABC transporter complex TagGH involved in teichoic acids export. Responsible for energy coupling to the transport system. The protein is Teichoic acids export ATP-binding protein TagH of Listeria monocytogenes serotype 4b (strain F2365).